A 345-amino-acid polypeptide reads, in one-letter code: Putative RING-H2 finger protein ATL36 (345 aa).

Residues 1–31 (MNIFTRYHLPRVVSGVILPLFLFHLLPYVTC) form the signal peptide. Residues 50-70 (SIIAIVVLAIFISLGMVSCCL) traverse the membrane as a helical segment. An RING-type; atypical zinc finger spans residues 123 to 165 (CAICLSEFEDQETLRWMPPCSHTFHANCIDVWLSSWSTCPVCR). Ser264 carries the post-translational modification Phosphoserine.

It belongs to the RING-type zinc finger family. ATL subfamily.

The protein localises to the membrane. The enzyme catalyses S-ubiquitinyl-[E2 ubiquitin-conjugating enzyme]-L-cysteine + [acceptor protein]-L-lysine = [E2 ubiquitin-conjugating enzyme]-L-cysteine + N(6)-ubiquitinyl-[acceptor protein]-L-lysine.. The protein operates within protein modification; protein ubiquitination. The chain is Putative RING-H2 finger protein ATL36 (ATL36) from Arabidopsis thaliana (Mouse-ear cress).